A 556-amino-acid polypeptide reads, in one-letter code: MLNLCHALRGVRQFSCSVIVKVKCASCSIKLQDQDPSKPGYYTKPKSLPDSKLNPDLQDLKYLLFSQDIQLSKQAIQNDPDLKTKRDLLLRVICKRCSNALHHNNYNPEEFPESTLNDILNYVPRGSNVMHIVPFVEFPLHLDPNVLKRNDLDTTLVLTKSDQVFKDKNAVSKKVPIFMKQFLKNTLRIDSNKTFAISALKNWNISMFYNYFKNYTYLLGNPNVGKSTLINTLLQKYLGYKVKIDSTGKINSPSEEVMQEAFTNPKNFFKIQAAGVSHIPNLTRSVQAYQVGGKILFDLPGYSTSTSRLRLEEPIDERWLQRLRKTDLFNRKHIKQKTYESMKGTSQGGCYTVGGIFYLVPPKGSINQIVKYIPGPSKTFKNIEKGIDVFNSCNSSSGTHPLSRYCGIKSVICEKSQYKRYAIPPFIGSIEIVLKDIGYILLRTTGRYEFKGLHEIWIPRGIQVGIREPLENLIESGYQRYIETNGKESSCPRDRPIISSLYEMAPDEADTLNAVKKSYLEKTEKDLSARRFVDDDPYDLVQHLEKKKNPYWYYQW.

The transit peptide at 1 to 21 directs the protein to the mitochondrion; it reads MLNLCHALRGVRQFSCSVIVK. The CP-type G domain occupies 113–305; that stretch reads ESTLNDILNY…LFDLPGYSTS (193 aa).

Belongs to the TRAFAC class YlqF/YawG GTPase family. GEP3 subfamily.

It localises to the mitochondrion. In terms of biological role, interacts genetically with prohibitins and thus may be involved in the mitochondrial lipid metabolism. The protein is Genetic interactor of prohibitins 3, mitochondrial (GEP3) of Saccharomyces cerevisiae (strain JAY291) (Baker's yeast).